The sequence spans 233 residues: Ribonuclease HII (233 aa).

Positions 26-215 constitute an RNase H type-2 domain; sequence QLVAGIDEVG…VRASEGEGLE (190 aa). A divalent metal cation is bound by residues Asp-32, Glu-33, and Asp-124. Positions 211–233 are disordered; the sequence is GEGLETAAGRQSSEGKKGRRPRG.

This sequence belongs to the RNase HII family. Mn(2+) is required as a cofactor. Mg(2+) serves as cofactor.

The protein resides in the cytoplasm. The enzyme catalyses Endonucleolytic cleavage to 5'-phosphomonoester.. In terms of biological role, endonuclease that specifically degrades the RNA of RNA-DNA hybrids. In Syntrophobacter fumaroxidans (strain DSM 10017 / MPOB), this protein is Ribonuclease HII.